The primary structure comprises 197 residues: Ion-translocating oxidoreductase complex subunit B (197 aa).

The hydrophobic stretch occupies residues 1–26 (MSTILIAIIALAALAAVFGAILGFAS). One can recognise a 4Fe-4S domain in the interval 32–90 (EADPIVDQIDSILPQTQCGQCGYPGCRPYAEAIANGDQINKCPPGGQATIEKLADLMGV). [4Fe-4S] cluster is bound by residues Cys49, Cys52, Cys57, Cys73, Cys114, Cys117, Cys120, Cys124, Cys144, Cys147, Cys150, and Cys154. 2 consecutive 4Fe-4S ferredoxin-type domains span residues 105–134 (TVAF…GGTK) and 135–164 (ALHT…MIPV).

It belongs to the 4Fe4S bacterial-type ferredoxin family. RnfB subfamily. As to quaternary structure, the complex is composed of six subunits: RnfA, RnfB, RnfC, RnfD, RnfE and RnfG. [4Fe-4S] cluster is required as a cofactor.

It is found in the cell inner membrane. Part of a membrane-bound complex that couples electron transfer with translocation of ions across the membrane. In Vibrio campbellii (strain ATCC BAA-1116), this protein is Ion-translocating oxidoreductase complex subunit B.